The sequence spans 106 residues: UPF0213 protein KPN78578_35340 (106 aa).

Residues 13–88 (VCWFLYLIRT…KQLTKREKER (76 aa)) enclose the GIY-YIG domain.

Belongs to the UPF0213 family.

In Klebsiella pneumoniae subsp. pneumoniae (strain ATCC 700721 / MGH 78578), this protein is UPF0213 protein KPN78578_35340.